The sequence spans 257 residues: DNA-binding and peroxide stress resistance protein YaaA (257 aa).

A Helix-hairpin-helix motif is present at residues 35 to 66 (IGIARKLSAPQIGKLMSISDKLADLNATRFHD).

The protein belongs to the UPF0246 family.

The protein localises to the cytoplasm. Functionally, protects bacteria from neutrophil-related defense upon infection of mammals. Binds DNA. The chain is DNA-binding and peroxide stress resistance protein YaaA from Klebsiella pneumoniae subsp. pneumoniae (strain HS11286).